We begin with the raw amino-acid sequence, 429 residues long: MLALLTVGVALAVAAGRAQDSPIPGSRFVCTALPPEAARAGCPLPAMPMQGGALSPEEELRAAVLQLRETVVQQKETLGAQREAIRELTGKLARCEGLAGGKARGTGKDTMGDLPRDPGHVVEQLSRSLQTLKDRLESLELQLRTNVSNAGLPSDFREVLQRRLGELERQLLRKVAELEDEKSLLHNETSAHRQKTESTLNALLQRVTELERGNSAFKSPDAFKVSLPLRTNYLYGKIKKTLPELYAFTICLWLRSSASPGIGTPFSYAVPGQANEIVLIEWGNNPIELLINDKVAQLPLFVSDGKWHHICITWTTRDGMWEAFQDGEKLGTGENLAPWHPIKPGGVLILGQEQDTVGGRFDATQAFVGELSQFNIWDRVLRAQEIINIANCSTNMPGNIIPWVDNNVDVFGGASKWPVETCEERLLDL.

A signal peptide spans 1-14 (MLALLTVGVALAVA). N-linked (GlcNAc...) asparagine glycosylation is found at Asn-146 and Asn-187. A Pentraxin (PTX) domain is found at 221–422 (DAFKVSLPLR…GASKWPVETC (202 aa)). Cys-251 and Cys-311 are oxidised to a cystine. Ca(2+) is bound by residues Asn-275, Glu-353, Gln-354, Asp-355, and Gln-365. An N-linked (GlcNAc...) asparagine glycan is attached at Asn-391.

Homooligomer or heterooligomer (probably pentamer) with neuronal pentraxin receptor (NPTXR). Requires Ca(2+) as cofactor.

It localises to the secreted. In terms of biological role, likely to play role in the modification of cellular properties that underlie long-term plasticity. Binds to agar matrix in a calcium-dependent manner. In Mus musculus (Mouse), this protein is Neuronal pentraxin-2 (Nptx2).